We begin with the raw amino-acid sequence, 510 residues long: D-alanine--D-alanyl carrier protein ligase (510 aa).

157-158 (TS) serves as a coordination point for ATP. Aspartate 202 provides a ligand contact to D-alanine. Position 297 to 302 (297 to 302 (NTYGPT)) interacts with ATP. Residue valine 306 participates in D-alanine binding. Aspartate 389 and lysine 498 together coordinate ATP. Residue lysine 498 participates in D-alanine binding.

It belongs to the ATP-dependent AMP-binding enzyme family. DltA subfamily.

It is found in the cytoplasm. It carries out the reaction holo-[D-alanyl-carrier protein] + D-alanine + ATP = D-alanyl-[D-alanyl-carrier protein] + AMP + diphosphate. It participates in cell wall biogenesis; lipoteichoic acid biosynthesis. Its function is as follows. Catalyzes the first step in the D-alanylation of lipoteichoic acid (LTA), the activation of D-alanine and its transfer onto the D-alanyl carrier protein (Dcp) DltC. In an ATP-dependent two-step reaction, forms a high energy D-alanyl-AMP intermediate, followed by transfer of the D-alanyl residue as a thiol ester to the phosphopantheinyl prosthetic group of the Dcp. D-alanylation of LTA plays an important role in modulating the properties of the cell wall in Gram-positive bacteria, influencing the net charge of the cell wall. In Listeria monocytogenes serotype 4a (strain HCC23), this protein is D-alanine--D-alanyl carrier protein ligase.